Reading from the N-terminus, the 355-residue chain is Peptide chain release factor 1 (355 aa).

Position 233 is an N5-methylglutamine (Gln233).

Belongs to the prokaryotic/mitochondrial release factor family. Post-translationally, methylated by PrmC. Methylation increases the termination efficiency of RF1.

The protein localises to the cytoplasm. In terms of biological role, peptide chain release factor 1 directs the termination of translation in response to the peptide chain termination codons UAG and UAA. The chain is Peptide chain release factor 1 from Desulfitobacterium hafniense (strain DSM 10664 / DCB-2).